A 743-amino-acid polypeptide reads, in one-letter code: Phosphoribosylformylglycinamidine synthase subunit PurL (743 aa).

H50 is an active-site residue. Residues Y53 and K92 each coordinate ATP. E94 is a Mg(2+) binding site. Residues 95 to 98 (SHNH) and R117 contribute to the substrate site. H96 (proton acceptor) is an active-site residue. D118 is a binding site for Mg(2+). A substrate-binding site is contributed by Q241. D269 provides a ligand contact to Mg(2+). 313–315 (ESQ) serves as a coordination point for substrate. Residues D494 and G531 each coordinate ATP. N532 serves as a coordination point for Mg(2+). S534 lines the substrate pocket.

Belongs to the FGAMS family. Monomer. Part of the FGAM synthase complex composed of 1 PurL, 1 PurQ and 2 PurS subunits.

The protein resides in the cytoplasm. It carries out the reaction N(2)-formyl-N(1)-(5-phospho-beta-D-ribosyl)glycinamide + L-glutamine + ATP + H2O = 2-formamido-N(1)-(5-O-phospho-beta-D-ribosyl)acetamidine + L-glutamate + ADP + phosphate + H(+). It participates in purine metabolism; IMP biosynthesis via de novo pathway; 5-amino-1-(5-phospho-D-ribosyl)imidazole from N(2)-formyl-N(1)-(5-phospho-D-ribosyl)glycinamide: step 1/2. Functionally, part of the phosphoribosylformylglycinamidine synthase complex involved in the purines biosynthetic pathway. Catalyzes the ATP-dependent conversion of formylglycinamide ribonucleotide (FGAR) and glutamine to yield formylglycinamidine ribonucleotide (FGAM) and glutamate. The FGAM synthase complex is composed of three subunits. PurQ produces an ammonia molecule by converting glutamine to glutamate. PurL transfers the ammonia molecule to FGAR to form FGAM in an ATP-dependent manner. PurS interacts with PurQ and PurL and is thought to assist in the transfer of the ammonia molecule from PurQ to PurL. The chain is Phosphoribosylformylglycinamidine synthase subunit PurL from Mesorhizobium japonicum (strain LMG 29417 / CECT 9101 / MAFF 303099) (Mesorhizobium loti (strain MAFF 303099)).